The following is a 345-amino-acid chain: Phosphoribosylformylglycinamidine cyclo-ligase (345 aa).

This sequence belongs to the AIR synthase family. As to quaternary structure, homodimer.

The protein localises to the cytoplasm. The enzyme catalyses 2-formamido-N(1)-(5-O-phospho-beta-D-ribosyl)acetamidine + ATP = 5-amino-1-(5-phospho-beta-D-ribosyl)imidazole + ADP + phosphate + H(+). It functions in the pathway purine metabolism; IMP biosynthesis via de novo pathway; 5-amino-1-(5-phospho-D-ribosyl)imidazole from N(2)-formyl-N(1)-(5-phospho-D-ribosyl)glycinamide: step 2/2. The polypeptide is Phosphoribosylformylglycinamidine cyclo-ligase (Escherichia coli O157:H7).